Here is a 924-residue protein sequence, read N- to C-terminus: DNA repair and recombination protein RDH54 (924 aa).

A compositionally biased stretch (basic and acidic residues) spans 1–10; the sequence is MQIPKYENKP. Disordered regions lie at residues 1-21 and 155-183; these read MQIP…GSNK and EALS…NDGG. Residues 168 to 178 show a composition bias toward low complexity; sequence TTSTTETVPST. Positions 299–487 constitute a Helicase ATP-binding domain; sequence LENDSDISGC…FTIIDFINPG (189 aa). 346–353 is a binding site for ATP; that stretch reads IPLTGLCK. A DEGH box motif is present at residues 472-475; the sequence is NDLN. A Glycyl lysine isopeptide (Lys-Gly) (interchain with G-Cter in ubiquitin) cross-link involves residue K615. The 160-residue stretch at 631–790 folds into the Helicase C-terminal domain; it reads KLRVLMTLLE…DSEMRNKESS (160 aa).

The protein belongs to the SNF2/RAD54 helicase family. In terms of assembly, interacts with RAD51 and DMC1.

The protein localises to the nucleus. The enzyme catalyses ATP + H2O = ADP + phosphate + H(+). In terms of biological role, involved in the recombinational repair of double-strand breaks (DSB) in DNA during mitosis and meiosis. Has DNA dependent ATPase activity. Promotes D-loop (displacement loop) formation with RAD51 recombinase. Modifies the topology of double-stranded DNA during the D-loop reaction to facilitate the invasion of the homologous duplex molecule by the initiating single-stranded DNA substrate. Required for adaptation from G2/M checkpoint arrest induced by a double strand break, by participating in monitoring the extent of single-stranded DNA produced by resection of DNA ends. This role is distinct from its roles in recombination. Promotes colocalization of RAD51 and DMC1 during meiotic recombination. Involved in crossover interference. The chain is DNA repair and recombination protein RDH54 (RDH54) from Saccharomyces cerevisiae (strain RM11-1a) (Baker's yeast).